We begin with the raw amino-acid sequence, 689 residues long: Glycine--tRNA ligase beta subunit (689 aa).

Belongs to the class-II aminoacyl-tRNA synthetase family. Tetramer of two alpha and two beta subunits.

The protein localises to the cytoplasm. The enzyme catalyses tRNA(Gly) + glycine + ATP = glycyl-tRNA(Gly) + AMP + diphosphate. This is Glycine--tRNA ligase beta subunit from Acinetobacter baylyi (strain ATCC 33305 / BD413 / ADP1).